The chain runs to 65 residues: Sodium channel alpha-toxin Acra4 (65 aa).

Residues 2–63 enclose the LCN-type CS-alpha/beta domain; sequence RDGYIVDDKN…PIKDPSYKCH (62 aa). 4 disulfides stabilise this stretch: Cys12-Cys62, Cys16-Cys34, Cys20-Cys44, and Cys24-Cys46. A propeptide (removed by a carboxypeptidase) is located at residue Arg65.

The protein belongs to the long (4 C-C) scorpion toxin superfamily. Sodium channel inhibitor family. Alpha subfamily. In terms of tissue distribution, expressed by the venom gland.

It is found in the secreted. Alpha toxins bind voltage-independently at site-3 of sodium channels (Nav) and inhibit the inactivation of the activated channels, thereby blocking neuronal transmission. Electrophysiological studies of this were performed using sodium-channels expressed in F11 cell culture, by patch-clamp recordings. Affinity of this toxin toward sodium channels in F11 cell line is in the order of 1 uM concentration. This is Sodium channel alpha-toxin Acra4 from Androctonus crassicauda (Arabian fat-tailed scorpion).